Reading from the N-terminus, the 470-residue chain is Uronate isomerase (470 aa).

This sequence belongs to the metallo-dependent hydrolases superfamily. Uronate isomerase family.

It carries out the reaction D-glucuronate = D-fructuronate. It catalyses the reaction aldehydo-D-galacturonate = keto-D-tagaturonate. It participates in carbohydrate metabolism; pentose and glucuronate interconversion. The sequence is that of Uronate isomerase from Salmonella heidelberg (strain SL476).